Consider the following 367-residue polypeptide: Glutamate 5-kinase (367 aa).

Residue lysine 10 coordinates ATP. Positions 50, 137, and 149 each coordinate substrate. Residues 169–170 (TD) and 211–217 (TGGMGTK) contribute to the ATP site. A PUA domain is found at 275 to 353 (AGELTVDAGA…QQIDAILGYE (79 aa)).

It belongs to the glutamate 5-kinase family.

It is found in the cytoplasm. It carries out the reaction L-glutamate + ATP = L-glutamyl 5-phosphate + ADP. It participates in amino-acid biosynthesis; L-proline biosynthesis; L-glutamate 5-semialdehyde from L-glutamate: step 1/2. Functionally, catalyzes the transfer of a phosphate group to glutamate to form L-glutamate 5-phosphate. The sequence is that of Glutamate 5-kinase from Klebsiella pneumoniae (strain 342).